A 240-amino-acid polypeptide reads, in one-letter code: UDP-2,3-diacylglucosamine hydrolase (240 aa).

5 residues coordinate Mn(2+): aspartate 8, histidine 10, aspartate 41, asparagine 79, and histidine 114. Residue 79–80 (NR) coordinates substrate. Residues aspartate 122, serine 160, asparagine 164, lysine 167, and histidine 195 each contribute to the substrate site. Mn(2+)-binding residues include histidine 195 and histidine 197.

This sequence belongs to the LpxH family. Mn(2+) is required as a cofactor.

It is found in the cell inner membrane. It carries out the reaction UDP-2-N,3-O-bis[(3R)-3-hydroxytetradecanoyl]-alpha-D-glucosamine + H2O = 2-N,3-O-bis[(3R)-3-hydroxytetradecanoyl]-alpha-D-glucosaminyl 1-phosphate + UMP + 2 H(+). Its pathway is glycolipid biosynthesis; lipid IV(A) biosynthesis; lipid IV(A) from (3R)-3-hydroxytetradecanoyl-[acyl-carrier-protein] and UDP-N-acetyl-alpha-D-glucosamine: step 4/6. Its function is as follows. Hydrolyzes the pyrophosphate bond of UDP-2,3-diacylglucosamine to yield 2,3-diacylglucosamine 1-phosphate (lipid X) and UMP by catalyzing the attack of water at the alpha-P atom. Involved in the biosynthesis of lipid A, a phosphorylated glycolipid that anchors the lipopolysaccharide to the outer membrane of the cell. The sequence is that of UDP-2,3-diacylglucosamine hydrolase from Salmonella arizonae (strain ATCC BAA-731 / CDC346-86 / RSK2980).